A 372-amino-acid chain; its full sequence is Ligninase C (372 aa).

An N-terminal signal peptide occupies residues 1–26 (MAFKSLLSFVSVIGALQGANAALTRR). The active-site Proton acceptor is His74. Ca(2+) contacts are provided by Asp75, Gly93, Asp95, and Ser97. Asn129 is a glycosylation site (N-linked (GlcNAc...) asparagine). Heme b is bound at residue His205. 5 residues coordinate Ca(2+): Thr206, Asp223, Thr225, Leu228, and Asp230. Residues 346-372 (TPFPTFPTDPGPKTAVAPVPKPPAARK) form a disordered region.

This sequence belongs to the peroxidase family. Ligninase subfamily. Requires Ca(2+) as cofactor. Heme b serves as cofactor.

The catalysed reaction is 1-(3,4-dimethoxyphenyl)-2-(2-methoxyphenoxy)propane-1,3-diol + H2O2 = 3,4-dimethoxybenzaldehyde + guaiacol + glycolaldehyde + H2O. The enzyme catalyses 2 (3,4-dimethoxyphenyl)methanol + H2O2 = 2 (3,4-dimethoxyphenyl)methanol radical + 2 H2O. It functions in the pathway secondary metabolite metabolism; lignin degradation. Its function is as follows. Depolymerization of lignin. Catalyzes the C(alpha)-C(beta) cleavage of the propyl side chains of lignin. The sequence is that of Ligninase C from Trametes versicolor (White-rot fungus).